The sequence spans 170 residues: Acetyl-CoA decarbonylase/synthase complex subunit epsilon 1 (170 aa).

This sequence belongs to the CdhB family. As to quaternary structure, heterotetramer of two alpha and two epsilon subunits. The ACDS complex is made up of alpha, epsilon, beta, gamma and delta subunits with a probable stoichiometry of (alpha(2)epsilon(2))(4)-beta(8)-(gamma(1)delta(1))(8).

It functions in the pathway one-carbon metabolism; methanogenesis from acetate. Functionally, part of a complex that catalyzes the reversible cleavage of acetyl-CoA, allowing growth on acetate as sole source of carbon and energy. The alpha-epsilon subcomponent functions as a carbon monoxide dehydrogenase. The precise role of the epsilon subunit is unclear; it may have a stabilizing role within the alpha(2)epsilon(2) component and/or be involved in electron transfer to FAD during a potential FAD-mediated CO oxidation. In Methanosarcina thermophila, this protein is Acetyl-CoA decarbonylase/synthase complex subunit epsilon 1 (cdhB1).